The sequence spans 397 residues: Ribosomal RNA large subunit methyltransferase I (397 aa).

Positions 2-78 (TPAIYLVKGR…EQEPIDRDFF (77 aa)) constitute a PUA domain.

The protein belongs to the methyltransferase superfamily. RlmI family.

It localises to the cytoplasm. The catalysed reaction is cytidine(1962) in 23S rRNA + S-adenosyl-L-methionine = 5-methylcytidine(1962) in 23S rRNA + S-adenosyl-L-homocysteine + H(+). Its function is as follows. Specifically methylates the cytosine at position 1962 (m5C1962) of 23S rRNA. The polypeptide is Ribosomal RNA large subunit methyltransferase I (Vibrio cholerae serotype O1 (strain ATCC 39541 / Classical Ogawa 395 / O395)).